A 192-amino-acid polypeptide reads, in one-letter code: dTTP/UTP pyrophosphatase (192 aa).

Residue aspartate 71 is the Proton acceptor of the active site.

It belongs to the Maf family. YhdE subfamily. It depends on a divalent metal cation as a cofactor.

Its subcellular location is the cytoplasm. It catalyses the reaction dTTP + H2O = dTMP + diphosphate + H(+). The enzyme catalyses UTP + H2O = UMP + diphosphate + H(+). Its function is as follows. Nucleoside triphosphate pyrophosphatase that hydrolyzes dTTP and UTP. May have a dual role in cell division arrest and in preventing the incorporation of modified nucleotides into cellular nucleic acids. This is dTTP/UTP pyrophosphatase from Clostridium tetani (strain Massachusetts / E88).